The sequence spans 232 residues: Large ribosomal subunit protein uL1 (232 aa).

The protein belongs to the universal ribosomal protein uL1 family. As to quaternary structure, part of the 50S ribosomal subunit.

Functionally, binds directly to 23S rRNA. The L1 stalk is quite mobile in the ribosome, and is involved in E site tRNA release. Protein L1 is also a translational repressor protein, it controls the translation of the L11 operon by binding to its mRNA. This is Large ribosomal subunit protein uL1 from Burkholderia cenocepacia (strain HI2424).